Consider the following 448-residue polypeptide: NADP-specific glutamate dehydrogenase (448 aa).

3 residues coordinate substrate: K88, Q109, and K112. K124 acts as the Proton donor in catalysis. G163 lines the substrate pocket. NADP(+) is bound by residues T207 and N238. Position 381 (S381) interacts with substrate.

The protein belongs to the Glu/Leu/Phe/Val dehydrogenases family. Homohexamer.

It carries out the reaction L-glutamate + NADP(+) + H2O = 2-oxoglutarate + NH4(+) + NADPH + H(+). Functionally, catalyzes the reversible oxidative deamination of glutamate to alpha-ketoglutarate and ammonia. This is NADP-specific glutamate dehydrogenase (gdhA) from Helicobacter pylori (strain J99 / ATCC 700824) (Campylobacter pylori J99).